Here is a 150-residue protein sequence, read N- to C-terminus: UPF0756 membrane protein CGSHiEE_06715 (150 aa).

4 consecutive transmembrane segments (helical) span residues M1 to L21, Y52 to G72, G81 to A101, and I123 to L143.

It belongs to the UPF0756 family.

It localises to the cell membrane. In Haemophilus influenzae (strain PittEE), this protein is UPF0756 membrane protein CGSHiEE_06715.